A 75-amino-acid chain; its full sequence is Protein SlyX homolog (75 aa).

The interval 56-75 (KNMDSSNMEDPANEPPPPHY) is disordered.

It belongs to the SlyX family.

The protein is Protein SlyX homolog of Vibrio parahaemolyticus serotype O3:K6 (strain RIMD 2210633).